Consider the following 89-residue polypeptide: MSTSVKHREFVGEPMGDKEVTCIAGIGPTYGTKLTDAGFDKAYVLFGQYLLLKKDEDLFIEWLKETAGVTANHAKTAFNCLNEWADQFM.

It belongs to the BAF family. In terms of assembly, interacts with emr-1 and lem-2. Interacts with lem-4l, leading to decreased phosphorylation by VRK1 and promoting dephosphorylation by protein phosphatase 2A (PP2A). In terms of processing, phosphorylated by vrk-1. Phosphorylation by vrk-1 in mitosis is essential to achieve correct timing of recruitment of nuclear envelope components during nuclear envelope assembly. Dephosphorylated by protein phosphatase 2A (PP2A) following interaction with lem-4l during mitotic exit, leading to mitotic nuclear envelope reassembly.

Its subcellular location is the nucleus. Its function is as follows. DNA-binding protein which plays an essential role in nuclear envelope formation. Required for normal chromosome segregation during mitosis. Associates with the nuclear lamina via its interaction with LEM domain containing proteins emr-1 and lem-2. In association with lem-3, plays a role in radiation-induced DNA damage repair response. The polypeptide is Barrier-to-autointegration factor 1 (baf-1) (Caenorhabditis elegans).